The primary structure comprises 713 residues: Calpastatin (713 aa).

2 disordered regions span residues 1-187 and 211-506; these read MNPT…LDPM and DKKE…PVLP. The segment covering 21–30 has biased composition (basic residues); it reads PNKKRHKKQA. Residue Lys32 forms a Glycyl lysine isopeptide (Lys-Gly) (interchain with G-Cter in SUMO2) linkage. The span at 46 to 63 shows a compositional bias: basic and acidic residues; that stretch reads VVHEKKTQEVKPKEHPEP. Lys50 carries the N6-acetyllysine modification. The segment covering 85 to 94 has biased composition (polar residues); sequence SRSNEQPTSE. Ser87 and Ser134 each carry phosphoserine. Thr136 is subject to Phosphothreonine. An Inhibitory domain 1 repeat occupies 171–223; the sequence is TEEDNTTYTGPEVLDPMSSTYIEELGKREVTLPPKYRELLDKKEGIPVPPPDT. Position 244 is a phosphoserine (Ser244). Composition is skewed to basic and acidic residues over residues 248 to 258, 304 to 332, and 342 to 367; these read DGKKTEKEKST, RKSE…KKCG, and YRLK…KPLS. Residues 307-359 form an Inhibitory domain 2 repeat; the sequence is EPELDLSSIKEIDEAKAKEEKLKKCGEDDETVPPEYRLKPAMDKDGKPLLPEA. A phosphoserine mark is found at Ser367, Ser369, and Ser376. Residues 370–379 are compositionally biased toward acidic residues; sequence ELIDELSEDF. Residues 380 to 397 are compositionally biased toward basic and acidic residues; that stretch reads DQSKRKEKQSKPTEKTKE. The residue at position 441 (Ser441) is a Phosphoserine. Residues 443-502 are compositionally biased toward basic and acidic residues; the sequence is GKKEADPEDGKPVEDKVKEKAKEEDREKLGEKEETIPPDYRLEEVKDKDGKTLPHKDPKE. Residues 447–500 form an Inhibitory domain 3 repeat; sequence ADPEDGKPVEDKVKEKAKEEDREKLGEKEETIPPDYRLEEVKDKDGKTLPHKDP. A phosphoserine mark is found at Ser517 and Ser528. The tract at residues 536–713 is disordered; the sequence is SAAVSEVVSQ…KQKSDGKSTS (178 aa). Residues 542 to 553 are compositionally biased toward polar residues; sequence VVSQTSAPTTHS. A phosphoserine mark is found at Ser575 and Ser577. One copy of the Inhibitory domain 4 repeat lies at 583 to 636; that stretch reads PDPDENKPIEDKVKEKAEAEHRDKLGERDDTIPPEYRHLLDKDEEGKSTKPPTK. Basic and acidic residues-rich tracts occupy residues 583–646 and 691–713; these read PDPD…KPEA and KAKD…KSTS.

This sequence belongs to the protease inhibitor I27 (calpastatin) family.

In terms of biological role, specific inhibition of calpain (calcium-dependent cysteine protease). Plays a key role in postmortem tenderization of meat and have been proposed to be involved in muscle protein degradation in living tissue. This is Calpastatin (CAST) from Sus scrofa (Pig).